The primary structure comprises 457 residues: CUB1 family protein C30C2.08 (457 aa).

2 coiled-coil regions span residues 119 to 174 (TQND…NISK) and 418 to 448 (QELV…EERE).

The protein belongs to the CUB1 family.

The protein resides in the cytoplasm. It is found in the nucleus. Its function is as follows. Involved in bleomycin tolerance with links to DNA repair and/or proteasome function. This is CUB1 family protein C30C2.08 from Schizosaccharomyces pombe (strain 972 / ATCC 24843) (Fission yeast).